A 523-amino-acid chain; its full sequence is Thiamine pathway transporter THI73 (523 aa).

Residues 1–79 (MKNMSQRSMD…LSPKVLRKVD (79 aa)) are Cytoplasmic-facing. A helical membrane pass occupies residues 80-100 (LFILPFLCCTYLLMFLDKALL). The Extracellular segment spans residues 101–118 (NYAASMGIKDHLKGNEFS). Residues 119–139 (NLGTIFSAAYIFMEPVVTYLI) traverse the membrane as a helical segment. Over 140–141 (QK) the chain is Cytoplasmic. Residues 142 to 162 (FPISKILGTFITVWGIVLACH) traverse the membrane as a helical segment. Topologically, residues 163 to 176 (AACKTYASLMVVRT) are extracellular. The chain crosses the membrane as a helical span at residues 177–197 (LLGLFESSSAVGCIAISGMYY). Residues 198–207 (TKSEQSARIG) lie on the Cytoplasmic side of the membrane. The chain crosses the membrane as a helical span at residues 208–228 (FWATQAGTGYIVGGLISFGFL). Residues 229-239 (HYHGTAFTSWQ) are Extracellular-facing. Residues 240–260 (IMFLVVGLVTVAFGVLTFLYL) traverse the membrane as a helical segment. Topologically, residues 261–312 (PDNVTNAWFLNKEEKIQVVEHIRANQTGLETKKFKKQQVKELFLHDKFTWPM) are cytoplasmic. The helical transmembrane segment at 313 to 333 (LLLTACSQISTGAIGTFSVTI) threads the bilayer. Over 334–345 (TGTFGFDKYETA) the chain is Extracellular. The helical transmembrane segment at 346 to 366 (LLQLPIGAITAMIILITTQML) threads the bilayer. The Cytoplasmic portion of the chain corresponds to 367–371 (SRWGH). A helical transmembrane segment spans residues 372 to 392 (ITLITTSMYIPAIIGCIVLIS). Over 393–400 (LPLSHKIG) the chain is Extracellular. The helical transmembrane segment at 401–421 (NLFSLYLLYSGSCVITNIYIW) threads the bilayer. At 422 to 432 (NSCNTSGYTKR) the chain is on the cytoplasmic side. A helical transmembrane segment spans residues 433 to 452 (VFRNAITMIVYNVSCIIAPQ). Over 453–466 (MFRAYSAPRYIPAK) the chain is Extracellular. A helical membrane pass occupies residues 467-487 (IALLVTQCVCVPLQLYIGYIC). Over 488–523 (KKENEKRDKEQEGQERKKYQFLDLTDIENRNFRYIY) the chain is Cytoplasmic.

The protein belongs to the major facilitator superfamily. Allantoate permease family.

It localises to the endoplasmic reticulum membrane. The protein localises to the cell membrane. Functionally, transports either thiamine or, rather, a related metabolite involved in the thiamine biosynthesis pathway. In Saccharomyces cerevisiae (strain ATCC 204508 / S288c) (Baker's yeast), this protein is Thiamine pathway transporter THI73 (THI73).